We begin with the raw amino-acid sequence, 494 residues long: Tripartite motif-containing protein 5 (494 aa).

Ala2 is subject to N-acetylalanine. The RING-type zinc finger occupies 15–59 (CPICLELLTEPLSLDCGHSFCQACITANHKESTLHQGERSCPLCR). A Phosphoserine modification is found at Ser86. A B box-type zinc finger spans residues 91–132 (QKVDLCARHGEKLLLFCQQDGNVICWLCERSQEHRGHHTFLV). The Zn(2+) site is built by Cys96, His99, Cys118, and His124. Residues 140-223 (RENLQVVLEM…RLVQSENDMV (84 aa)) are a coiled coil. The tract at residues 186–199 (FKQLRDILDCEESN) is required for interaction with GABARAP and for autophagy. Positions 280–494 (PDLKGMLQVS…LPMTLCSPRS (215 aa)) constitute a B30.2/SPRY domain.

The protein belongs to the TRIM/RBCC family. In terms of assembly, can form homodimers and homotrimers. In addition to lower-order dimerization, also exhibits a higher-order multimerization and both low- and high-order multimerizations are essential for its restriction activity. Interacts with BTBD1 and BTBD2. Interacts with PSMC4, PSMC5, PSMD7 and HSPA8/HSC70. Interacts (via B30.2/SPRY domain) with HSPA1A/B. Interacts with PSMC2, MAP3K7/TAK1, TAB2 and TAB3. Interacts with SQSTM1. Interacts with TRIM6 and TRIM34. Interacts with ULK1 (phosphorylated form), GABARAP, GABARAPL1, GABARAPL2, MAP1LC3A, MAP1LC3C and BECN1. In terms of processing, degraded in a proteasome-independent fashion in the absence of viral infection but in a proteasome-dependent fashion following exposure to restriction sensitive virus. Autoubiquitinated in a RING finger- and UBE2D2-dependent manner. Monoubiquitinated by TRIM21. Deubiquitinated by Yersinia YopJ. Ubiquitination may not lead to proteasomal degradation.

Its subcellular location is the cytoplasm. It localises to the nucleus. The catalysed reaction is S-ubiquitinyl-[E2 ubiquitin-conjugating enzyme]-L-cysteine + [acceptor protein]-L-lysine = [E2 ubiquitin-conjugating enzyme]-L-cysteine + N(6)-ubiquitinyl-[acceptor protein]-L-lysine.. The protein operates within protein modification; protein ubiquitination. Capsid-specific restriction factor that prevents infection from non-host-adapted retroviruses. Blocks viral replication early in the life cycle, after viral entry but before reverse transcription. In addition to acting as a capsid-specific restriction factor, also acts as a pattern recognition receptor that activates innate immune signaling in response to the retroviral capsid lattice. Binding to the viral capsid triggers its E3 ubiquitin ligase activity, and in concert with the heterodimeric ubiquitin conjugating enzyme complex UBE2V1-UBE2N (also known as UBC13-UEV1A complex) generates 'Lys-63'-linked polyubiquitin chains, which in turn are catalysts in the autophosphorylation of the MAP3K7/TAK1 complex (includes TAK1, TAB2, and TAB3). Activation of the MAP3K7/TAK1 complex by autophosphorylation results in the induction and expression of NF-kappa-B and MAPK-responsive inflammatory genes, thereby leading to an innate immune response in the infected cell. Plays a role in regulating autophagy through activation of autophagy regulator BECN1 by causing its dissociation from its inhibitors BCL2 and TAB2. This chain is Tripartite motif-containing protein 5 (TRIM5), found in Plecturocebus donacophilus (Bolivian gray titi monkey).